We begin with the raw amino-acid sequence, 295 residues long: Virginiamycin B lyase (295 aa).

Residue H227 coordinates substrate. E267 provides a ligand contact to Mg(2+). Residue H269 is the Proton acceptor of the active site. Residue E284 coordinates Mg(2+).

Belongs to the Vgb family. In terms of assembly, monomer. Requires Mg(2+) as cofactor.

Inactivates the type B streptogramin antibiotics by linearizing the lactone ring at the ester linkage, generating a free phenylglycine carboxylate and converting the threonyl moiety into 2-amino-butenoic acid. The protein is Virginiamycin B lyase of Bacillus licheniformis (strain ATCC 14580 / DSM 13 / JCM 2505 / CCUG 7422 / NBRC 12200 / NCIMB 9375 / NCTC 10341 / NRRL NRS-1264 / Gibson 46).